A 375-amino-acid polypeptide reads, in one-letter code: 4-hydroxy-3-methylbut-2-en-1-yl diphosphate synthase (flavodoxin) (375 aa).

Residues cysteine 270, cysteine 273, cysteine 305, and glutamate 312 each coordinate [4Fe-4S] cluster.

The protein belongs to the IspG family. The cofactor is [4Fe-4S] cluster.

The enzyme catalyses (2E)-4-hydroxy-3-methylbut-2-enyl diphosphate + oxidized [flavodoxin] + H2O + 2 H(+) = 2-C-methyl-D-erythritol 2,4-cyclic diphosphate + reduced [flavodoxin]. Its pathway is isoprenoid biosynthesis; isopentenyl diphosphate biosynthesis via DXP pathway; isopentenyl diphosphate from 1-deoxy-D-xylulose 5-phosphate: step 5/6. Its function is as follows. Converts 2C-methyl-D-erythritol 2,4-cyclodiphosphate (ME-2,4cPP) into 1-hydroxy-2-methyl-2-(E)-butenyl 4-diphosphate. The chain is 4-hydroxy-3-methylbut-2-en-1-yl diphosphate synthase (flavodoxin) from Shigella flexneri serotype 5b (strain 8401).